The following is a 378-amino-acid chain: Probable pectin lyase C (378 aa).

The first 18 residues, 1 to 18 (MKVPFLQLLCLNAALASA), serve as a signal peptide directing secretion. Cystine bridges form between cysteine 81–cysteine 100 and cysteine 90–cysteine 220. A glycan (N-linked (GlcNAc...) asparagine) is linked at asparagine 123. Arginine 250 is an active-site residue. Cysteines 316 and 324 form a disulfide.

The protein belongs to the polysaccharide lyase 1 family.

The protein localises to the secreted. It catalyses the reaction Eliminative cleavage of (1-&gt;4)-alpha-D-galacturonan methyl ester to give oligosaccharides with 4-deoxy-6-O-methyl-alpha-D-galact-4-enuronosyl groups at their non-reducing ends.. Pectinolytic enzymes consist of four classes of enzymes: pectin lyase, polygalacturonase, pectin methylesterase and rhamnogalacturonase. Among pectinolytic enzymes, pectin lyase is the most important in depolymerization of pectin, since it cleaves internal glycosidic bonds of highly methylated pectins. This is Probable pectin lyase C (pelC) from Aspergillus niger.